Reading from the N-terminus, the 371-residue chain is Dead end protein homolog 1 (371 aa).

RRM domains lie at 85–163 (PQDI…ALDG) and 165–245 (PGNF…KLRS).

It is found in the nucleus. Its subcellular location is the cytoplasm. RNA-binding factor that positively regulates gene expression by prohibiting miRNA-mediated gene suppression. Relieves miRNA repression in germline cells. Prohibits the function of several miRNAs by blocking the accessibility of target mRNAs. Sequence-specific RNA-binding factor that binds to U-rich regions (URRs) in the 3'untranslated region (3'-UTR) of several mRNAs. Does not bind to miRNAs. May play a role during early embryonic survival. The protein is Dead end protein homolog 1 (dnd1) of Xenopus laevis (African clawed frog).